A 256-amino-acid chain; its full sequence is tRNA pseudouridine synthase A 1 (256 aa).

Asp53 (nucleophile) is an active-site residue. Residue Tyr111 coordinates substrate.

This sequence belongs to the tRNA pseudouridine synthase TruA family. As to quaternary structure, homodimer.

It catalyses the reaction uridine(38/39/40) in tRNA = pseudouridine(38/39/40) in tRNA. Functionally, formation of pseudouridine at positions 38, 39 and 40 in the anticodon stem and loop of transfer RNAs. This is tRNA pseudouridine synthase A 1 from Protochlamydia amoebophila (strain UWE25).